Reading from the N-terminus, the 316-residue chain is tRNA dimethylallyltransferase (316 aa).

An ATP-binding site is contributed by 17–24 (GPTASGKT). 19–24 (TASGKT) is a binding site for substrate. 4 interaction with substrate tRNA regions span residues 42 to 45 (DSAL), 166 to 170 (QRLSR), 247 to 252 (RCVGYR), and 280 to 287 (KRQITWLR).

Belongs to the IPP transferase family. Monomer. It depends on Mg(2+) as a cofactor.

It carries out the reaction adenosine(37) in tRNA + dimethylallyl diphosphate = N(6)-dimethylallyladenosine(37) in tRNA + diphosphate. Functionally, catalyzes the transfer of a dimethylallyl group onto the adenine at position 37 in tRNAs that read codons beginning with uridine, leading to the formation of N6-(dimethylallyl)adenosine (i(6)A). This Escherichia fergusonii (strain ATCC 35469 / DSM 13698 / CCUG 18766 / IAM 14443 / JCM 21226 / LMG 7866 / NBRC 102419 / NCTC 12128 / CDC 0568-73) protein is tRNA dimethylallyltransferase.